The sequence spans 487 residues: GTPase Der (487 aa).

2 consecutive EngA-type G domains span residues 3–166 and 193–366; these read PVIA…PRDA and IKIA…QSAV. GTP-binding positions include 9-16, 56-60, 118-121, 199-206, 246-250, and 311-314; these read GRPNVGKS, DTGGI, NKID, DTAGV, and NKWD. The region spanning 367-451 is the KH-like domain; that stretch reads TRWPTSRLTQ…PIRIEYKGGE (85 aa). The span at 448 to 461 shows a compositional bias: basic and acidic residues; the sequence is KGGENPYEGKKNTL. Positions 448-487 are disordered; it reads KGGENPYEGKKNTLTDRQVNKKRRLMSHHKKAEKKRRDKR. Residues 467–487 show a composition bias toward basic residues; the sequence is NKKRRLMSHHKKAEKKRRDKR.

The protein belongs to the TRAFAC class TrmE-Era-EngA-EngB-Septin-like GTPase superfamily. EngA (Der) GTPase family. In terms of assembly, associates with the 50S ribosomal subunit.

Functionally, GTPase that plays an essential role in the late steps of ribosome biogenesis. The chain is GTPase Der from Pseudomonas putida (strain ATCC 700007 / DSM 6899 / JCM 31910 / BCRC 17059 / LMG 24140 / F1).